A 275-amino-acid chain; its full sequence is NAC domain-containing protein 2 (275 aa).

One can recognise an NAC domain in the interval 10 to 162 (LPPGFRFHPT…DWVLCRIYKK (153 aa)). A DNA-binding region spans residues 107–168 (VGIKKALVFY…IYKKKNLERA (62 aa)).

Expressed in roots, stem, flowers, and leaves.

It is found in the nucleus. Its function is as follows. Transcription factor that binds DNA motifs 5'-CGT[AG](5N)NACG[ACT][AC][AT][ACG][ACT]-3' and 5'-CACG[ACT][AC][AT][AGT][CT]-3' in target genes promoters. Promotes leaf senescence (developmental, light-induced and ABA-induced senescence) and regulates fruit yield and sugar content, probably by establishing abscisic acid (ABA) homeostasis. Activates the expression of senescence and ABA associated genes including NCED1, ABCG40, CYP707A2, SAG113, SGR1 and PAO, by directly binding to their promoters. This chain is NAC domain-containing protein 2, found in Solanum lycopersicum (Tomato).